A 520-amino-acid chain; its full sequence is Probable kinase 098L (520 aa).

Residues 82–393 (LTSVQSFGSK…NSPLLKKGFV (312 aa)) form the Protein kinase domain. ATP contacts are provided by residues 88–96 (FGSKSKQGI) and lysine 111. The active-site Proton acceptor is aspartate 205. Positions 416 to 442 (QTAQLIETDKEILDNLIDDLELKIVRK) form a coiled coil.

This sequence belongs to the protein kinase superfamily.

Probable kinase. The protein is Probable kinase 098L of Aedes vexans (Inland floodwater mosquito).